Here is a 335-residue protein sequence, read N- to C-terminus: Glutamyl-tRNA reductase (335 aa).

Substrate-binding positions include 60–63, serine 110, 115–117, and glutamine 121; these read TCHR and ETE. Cysteine 61 (nucleophile) is an active-site residue. NADP(+) is bound at residue 189 to 194; the sequence is GYSEIN.

This sequence belongs to the glutamyl-tRNA reductase family. In terms of assembly, homodimer.

It carries out the reaction (S)-4-amino-5-oxopentanoate + tRNA(Glu) + NADP(+) = L-glutamyl-tRNA(Glu) + NADPH + H(+). Its pathway is porphyrin-containing compound metabolism; protoporphyrin-IX biosynthesis; 5-aminolevulinate from L-glutamyl-tRNA(Glu): step 1/2. Its function is as follows. Catalyzes the NADPH-dependent reduction of glutamyl-tRNA(Glu) to glutamate 1-semialdehyde (GSA). This Chlamydia trachomatis serovar L2 (strain ATCC VR-902B / DSM 19102 / 434/Bu) protein is Glutamyl-tRNA reductase.